The following is a 722-amino-acid chain: Polyribonucleotide nucleotidyltransferase (722 aa).

2 residues coordinate Mg(2+): D487 and D493. The KH domain occupies 554-613 (PRMVSFKIHPDKIREVIGKGGATIQALTKETGCSIDIKDDGTVTIASTSAEGMAEAKARI). Positions 623–691 (GKIYEGPVVK…ERGRLRLSLK (69 aa)) constitute an S1 motif domain.

Belongs to the polyribonucleotide nucleotidyltransferase family. Requires Mg(2+) as cofactor.

The protein resides in the cytoplasm. It catalyses the reaction RNA(n+1) + phosphate = RNA(n) + a ribonucleoside 5'-diphosphate. Its function is as follows. Involved in mRNA degradation. Catalyzes the phosphorolysis of single-stranded polyribonucleotides processively in the 3'- to 5'-direction. This is Polyribonucleotide nucleotidyltransferase from Polynucleobacter necessarius subsp. necessarius (strain STIR1).